The sequence spans 131 residues: Calvin cycle protein CP12-2, chloroplastic (131 aa).

The transit peptide at 1–53 (MATIATGLNIATQRVFVTSENRPVCLAGPVHLNNSWNLGSRTTNRMMKLQPIK) directs the protein to the chloroplast. Cystine bridges form between Cys75–Cys84 and Cys117–Cys126. The tract at residues 97-131 (AASHARDKKKADGSDPLEEYCKDNPETNECRTYDN) is disordered. Over residues 105–131 (KKADGSDPLEEYCKDNPETNECRTYDN) the composition is skewed to basic and acidic residues.

It belongs to the CP12 family. In terms of assembly, monomer. Component of a complex that contains two dimers of PRK, two tetramers of GAPDH and CP12. CP12 associates with GAPDH, causing its conformation to change. This GAPDH/CP12 complex binds PRK to form a half-complex (one unit). This unit probably dimerizes due partially to interactions between the enzymes of each unit. Contains two disulfide bonds; only the oxidized protein, with two disulfide bonds, is active in complex formation. The C-terminal disulfide is involved in the interaction with GAPDH and the N-terminal disulfide mediates the binding of PRK with this binary complex. As to expression, mostly expressed in cotyledons, leaves and flower stalks, and, to a lower extent, in flowers and stems. Barely detectable in roots and siliques.

It localises to the plastid. The protein localises to the chloroplast. Functionally, acts as a linker essential in the assembly of a core complex of PRK/GAPDH. Coordinates the reversible inactivation of chloroplast enzymes GAPDH and PRK during darkness in photosynthetic tissues. The sequence is that of Calvin cycle protein CP12-2, chloroplastic (CP12-2) from Arabidopsis thaliana (Mouse-ear cress).